The sequence spans 361 residues: Rho-GTPase-activating protein 5 (361 aa).

The region spanning 52-245 (IFLTRRDGEK…FLINHQGSFI (194 aa)) is the Rho-GAP domain. The segment covering 306–323 (SSATYSNSPSSNFSNMKS) has biased composition (low complexity). The segment at 306–345 (SSATYSNSPSSNFSNMKSSEVDPGSPPRIKSRSYSLSRSS) is disordered.

It is found in the membrane. In terms of biological role, GTPase-activating protein for Rho1. Has a role in the negative regulation of (1-3)beta-D-glucan synthase activity and cell integrity. The protein is Rho-GTPase-activating protein 5 (rga5) of Schizosaccharomyces pombe (strain 972 / ATCC 24843) (Fission yeast).